We begin with the raw amino-acid sequence, 374 residues long: DNA replication and repair protein RecF (374 aa).

30-37 (GPNAQGKT) contributes to the ATP binding site.

It belongs to the RecF family.

It is found in the cytoplasm. The RecF protein is involved in DNA metabolism; it is required for DNA replication and normal SOS inducibility. RecF binds preferentially to single-stranded, linear DNA. It also seems to bind ATP. This Lactobacillus johnsonii (strain CNCM I-12250 / La1 / NCC 533) protein is DNA replication and repair protein RecF.